The chain runs to 833 residues: Leucine--tRNA ligase (833 aa).

The short motif at 41 to 52 is the 'HIGH' region element; that stretch reads PYPSGAGLHVGH. The short motif at 610 to 614 is the 'KMSKS' region element; the sequence is KMSKS. Lysine 613 contacts ATP.

Belongs to the class-I aminoacyl-tRNA synthetase family.

It is found in the cytoplasm. It catalyses the reaction tRNA(Leu) + L-leucine + ATP = L-leucyl-tRNA(Leu) + AMP + diphosphate. The protein is Leucine--tRNA ligase of Streptococcus sanguinis (strain SK36).